We begin with the raw amino-acid sequence, 402 residues long: NADH-quinone oxidoreductase subunit D (402 aa).

Belongs to the complex I 49 kDa subunit family. NDH-1 is composed of 14 different subunits. Subunits NuoB, C, D, E, F, and G constitute the peripheral sector of the complex.

It is found in the cell inner membrane. It carries out the reaction a quinone + NADH + 5 H(+)(in) = a quinol + NAD(+) + 4 H(+)(out). Its function is as follows. NDH-1 shuttles electrons from NADH, via FMN and iron-sulfur (Fe-S) centers, to quinones in the respiratory chain. The immediate electron acceptor for the enzyme in this species is believed to be ubiquinone. Couples the redox reaction to proton translocation (for every two electrons transferred, four hydrogen ions are translocated across the cytoplasmic membrane), and thus conserves the redox energy in a proton gradient. The protein is NADH-quinone oxidoreductase subunit D of Cereibacter sphaeroides (strain ATCC 17029 / ATH 2.4.9) (Rhodobacter sphaeroides).